Reading from the N-terminus, the 56-residue chain is MAYKIADSCVSCGACASECPVNAISQGDSIFVIDADTCIDCGNCANVCPVGAPVQE.

2 4Fe-4S ferredoxin-type domains span residues Ala-2–Asp-28 and Ser-29–Glu-56. [4Fe-4S] cluster-binding residues include Cys-9, Cys-12, Cys-15, Cys-19, Cys-38, Cys-41, Cys-44, and Cys-48.

[4Fe-4S] cluster is required as a cofactor.

Functionally, ferredoxins are iron-sulfur proteins that transfer electrons in a wide variety of metabolic reactions. The chain is Ferredoxin from Clostridium pasteurianum.